The primary structure comprises 840 residues: Probable alpha-glucuronidase A (840 aa).

Residues 1–19 (MWSGIPIFALLSSIGIAAA) form the signal peptide. Asn-50, Asn-149, Asn-222, Asn-262, Asn-279, Asn-310, Asn-465, Asn-527, Asn-576, Asn-610, Asn-682, Asn-723, and Asn-732 each carry an N-linked (GlcNAc...) asparagine glycan.

It belongs to the glycosyl hydrolase 67 family.

Its subcellular location is the secreted. It carries out the reaction an alpha-D-glucuronoside + H2O = D-glucuronate + an alcohol. In terms of biological role, alpha-glucuronidase involved in the hydrolysis of xylan, a major structural heterogeneous polysaccharide found in plant biomass representing the second most abundant polysaccharide in the biosphere, after cellulose. Releases 4-O-methylglucuronic acid from xylan. In Aspergillus fumigatus (strain CBS 144.89 / FGSC A1163 / CEA10) (Neosartorya fumigata), this protein is Probable alpha-glucuronidase A (aguA).